Reading from the N-terminus, the 82-residue chain is Sec-independent protein translocase protein TatA (82 aa).

The chain crosses the membrane as a helical span at residues 1 to 21; that stretch reads MHPPSITQLLIILLIIVLLFG. A disordered region spans residues 42 to 82; sequence AVKEDEEDNQSEENTKSQIKQSESKNENVSKTHTDSQKQDT. Residues 63 to 82 show a composition bias toward basic and acidic residues; that stretch reads SESKNENVSKTHTDSQKQDT.

Belongs to the TatA/E family. The Tat system comprises two distinct complexes: a TatABC complex, containing multiple copies of TatA, TatB and TatC subunits, and a separate TatA complex, containing only TatA subunits. Substrates initially bind to the TatABC complex, which probably triggers association of the separate TatA complex to form the active translocon.

It is found in the cell inner membrane. Part of the twin-arginine translocation (Tat) system that transports large folded proteins containing a characteristic twin-arginine motif in their signal peptide across membranes. TatA could form the protein-conducting channel of the Tat system. This is Sec-independent protein translocase protein TatA from Helicobacter hepaticus (strain ATCC 51449 / 3B1).